The primary structure comprises 316 residues: tRNA dimethylallyltransferase (316 aa).

17–24 (GPTASGKT) contacts ATP. Position 19-24 (19-24 (TASGKT)) interacts with substrate. 3 interaction with substrate tRNA regions span residues 42–45 (DSAL), 166–170 (QRLSR), and 247–252 (RCVGYR).

Belongs to the IPP transferase family. As to quaternary structure, monomer. It depends on Mg(2+) as a cofactor.

It catalyses the reaction adenosine(37) in tRNA + dimethylallyl diphosphate = N(6)-dimethylallyladenosine(37) in tRNA + diphosphate. Catalyzes the transfer of a dimethylallyl group onto the adenine at position 37 in tRNAs that read codons beginning with uridine, leading to the formation of N6-(dimethylallyl)adenosine (i(6)A). This is tRNA dimethylallyltransferase from Erwinia tasmaniensis (strain DSM 17950 / CFBP 7177 / CIP 109463 / NCPPB 4357 / Et1/99).